Reading from the N-terminus, the 273-residue chain is Acetyl-coenzyme A carboxylase carboxyl transferase subunit alpha (273 aa).

Positions 1–244 (MKKATQSKAW…KVVLKQALDE (244 aa)) constitute a CoA carboxyltransferase C-terminal domain.

This sequence belongs to the AccA family. As to quaternary structure, acetyl-CoA carboxylase is a heterohexamer composed of biotin carboxyl carrier protein (AccB), biotin carboxylase (AccC) and two subunits each of ACCase subunit alpha (AccA) and ACCase subunit beta (AccD).

The protein localises to the cytoplasm. It carries out the reaction N(6)-carboxybiotinyl-L-lysyl-[protein] + acetyl-CoA = N(6)-biotinyl-L-lysyl-[protein] + malonyl-CoA. Its pathway is lipid metabolism; malonyl-CoA biosynthesis; malonyl-CoA from acetyl-CoA: step 1/1. Component of the acetyl coenzyme A carboxylase (ACC) complex. First, biotin carboxylase catalyzes the carboxylation of biotin on its carrier protein (BCCP) and then the CO(2) group is transferred by the carboxyltransferase to acetyl-CoA to form malonyl-CoA. The sequence is that of Acetyl-coenzyme A carboxylase carboxyl transferase subunit alpha from Acinetobacter baumannii (strain ACICU).